We begin with the raw amino-acid sequence, 434 residues long: UDP-N-acetylglucosamine 1-carboxyvinyltransferase (434 aa).

Residue 22–23 (KN) participates in phosphoenolpyruvate binding. R93 contacts UDP-N-acetyl-alpha-D-glucosamine. C117 acts as the Proton donor in catalysis. 2-(S-cysteinyl)pyruvic acid O-phosphothioketal is present on C117. Residues D307 and V329 each coordinate UDP-N-acetyl-alpha-D-glucosamine.

It belongs to the EPSP synthase family. MurA subfamily.

The protein resides in the cytoplasm. It carries out the reaction phosphoenolpyruvate + UDP-N-acetyl-alpha-D-glucosamine = UDP-N-acetyl-3-O-(1-carboxyvinyl)-alpha-D-glucosamine + phosphate. The protein operates within cell wall biogenesis; peptidoglycan biosynthesis. Functionally, cell wall formation. Adds enolpyruvyl to UDP-N-acetylglucosamine. The chain is UDP-N-acetylglucosamine 1-carboxyvinyltransferase from Coxiella burnetii (strain CbuG_Q212) (Coxiella burnetii (strain Q212)).